The sequence spans 209 residues: MKGLIGRKVGMTRIFTEDGVSIPVTVIEIEANRVTQVKDLENDGYRAIQVTAGTKKANRVIKPEAGHFAKAGVEAGRGLWEFRVEDGEEVTVGQSITVELFADVKKVDVTGTSKGKGFAGTVKRWNFRTQDATHGNSLSHRVPGSIGQNQTPGKVFKGKKMAGQLGNERVTVQSLDVVRVDVERNLLLVKGAVPGATGGDLIVKPAVKA.

A disordered region spans residues 133 to 152 (THGNSLSHRVPGSIGQNQTP). An N5-methylglutamine modification is found at Gln150.

This sequence belongs to the universal ribosomal protein uL3 family. In terms of assembly, part of the 50S ribosomal subunit. Forms a cluster with proteins L14 and L19. Methylated by PrmB.

In terms of biological role, one of the primary rRNA binding proteins, it binds directly near the 3'-end of the 23S rRNA, where it nucleates assembly of the 50S subunit. In Sodalis glossinidius (strain morsitans), this protein is Large ribosomal subunit protein uL3.